A 297-amino-acid chain; its full sequence is tRNA dimethylallyltransferase (297 aa).

An ATP-binding site is contributed by 8-15 (GATASGKS). 10-15 (TASGKS) provides a ligand contact to substrate. An interaction with substrate tRNA region spans residues 33–36 (DSLS).

The protein belongs to the IPP transferase family. In terms of assembly, monomer. Mg(2+) is required as a cofactor.

It carries out the reaction adenosine(37) in tRNA + dimethylallyl diphosphate = N(6)-dimethylallyladenosine(37) in tRNA + diphosphate. Its function is as follows. Catalyzes the transfer of a dimethylallyl group onto the adenine at position 37 in tRNAs that read codons beginning with uridine, leading to the formation of N6-(dimethylallyl)adenosine (i(6)A). The protein is tRNA dimethylallyltransferase of Sulfurimonas denitrificans (strain ATCC 33889 / DSM 1251) (Thiomicrospira denitrificans (strain ATCC 33889 / DSM 1251)).